Consider the following 354-residue polypeptide: tRNA N6-adenosine threonylcarbamoyltransferase (354 aa).

2 residues coordinate Fe cation: histidine 115 and histidine 119. Substrate contacts are provided by residues 138–142 (LVSGG), aspartate 171, glycine 184, and asparagine 276. Residue aspartate 304 coordinates Fe cation.

It belongs to the KAE1 / TsaD family. Requires Fe(2+) as cofactor.

It localises to the cytoplasm. It carries out the reaction L-threonylcarbamoyladenylate + adenosine(37) in tRNA = N(6)-L-threonylcarbamoyladenosine(37) in tRNA + AMP + H(+). Its function is as follows. Required for the formation of a threonylcarbamoyl group on adenosine at position 37 (t(6)A37) in tRNAs that read codons beginning with adenine. Is involved in the transfer of the threonylcarbamoyl moiety of threonylcarbamoyl-AMP (TC-AMP) to the N6 group of A37, together with TsaE and TsaB. TsaD likely plays a direct catalytic role in this reaction. This chain is tRNA N6-adenosine threonylcarbamoyltransferase, found in Xanthomonas campestris pv. campestris (strain 8004).